Consider the following 469-residue polypeptide: UDP-glycosyltransferase 75B1 (469 aa).

H16 serves as the catalytic Proton acceptor. H16 provides a ligand contact to an anthocyanidin. UDP-alpha-D-glucose is bound by residues Q334, H349, W352, S354, E357, D373, and Q374.

The protein belongs to the UDP-glycosyltransferase family. Interacts with CALS1, ROP1 and phragmoplastin.

Its subcellular location is the cytoplasm. It localises to the perinuclear region. It is found in the cytoskeleton. The protein resides in the phragmoplast. It carries out the reaction (indol-3-yl)acetate + UDP-alpha-D-glucose = 1-O-(indol-3-ylacetyl)-beta-D-glucose + UDP. Its pathway is plant hormone metabolism; auxin conjugation. In terms of biological role, possesses low catalytic activity on indole-3-acetic acid (IAA) in vitro. May transfer UDP-glucose from sucrose synthase to callose synthase for the synthesis of callose at the forming cell plate during cytokinesis. Has high affinity for 4-aminobenzoate. Catalyzes the formation of 4-aminobenzoate glucose ester which represents a storage form of 4-aminobenzoate in the vacuole. Is the major source of this activity in the plant. Also active in vitro on benzoates and benzoate derivatives. In Arabidopsis thaliana (Mouse-ear cress), this protein is UDP-glycosyltransferase 75B1 (UGT75B1).